Consider the following 34-residue polypeptide: uncharacterized protein (34 aa).

The helical transmembrane segment at 10-30 (LIITSSFFAIAVVLVLSVLLI) threads the bilayer.

The protein resides in the membrane. This is an uncharacterized protein from Shigella flexneri.